The chain runs to 101 residues: Large ribosomal subunit protein bL21 (101 aa).

The protein belongs to the bacterial ribosomal protein bL21 family. As to quaternary structure, part of the 50S ribosomal subunit. Contacts protein L20.

Its function is as follows. This protein binds to 23S rRNA in the presence of protein L20. This chain is Large ribosomal subunit protein bL21, found in Micrococcus luteus (strain ATCC 4698 / DSM 20030 / JCM 1464 / CCM 169 / CCUG 5858 / IAM 1056 / NBRC 3333 / NCIMB 9278 / NCTC 2665 / VKM Ac-2230) (Micrococcus lysodeikticus).